A 98-amino-acid chain; its full sequence is Small ribosomal subunit protein bS20 (98 aa).

Residues 1–12 (MAPRKPSKKVGP) show a composition bias toward basic residues. Positions 1 to 34 (MAPRKPSKKVGPQKRPSAEKRVITSKKKQLRNQS) are disordered.

This sequence belongs to the bacterial ribosomal protein bS20 family.

Binds directly to 16S ribosomal RNA. The sequence is that of Small ribosomal subunit protein bS20 from Chlamydia muridarum (strain MoPn / Nigg).